The chain runs to 316 residues: Beta-ketoacyl-[acyl-carrier-protein] synthase III 4 (316 aa).

Active-site residues include cysteine 114 and histidine 242. The segment at 243 to 247 (QANLR) is ACP-binding. Asparagine 272 is an active-site residue.

Belongs to the thiolase-like superfamily. FabH family. As to quaternary structure, homodimer.

The protein localises to the cytoplasm. It carries out the reaction malonyl-[ACP] + acetyl-CoA + H(+) = 3-oxobutanoyl-[ACP] + CO2 + CoA. Its pathway is lipid metabolism; fatty acid biosynthesis. Functionally, catalyzes the condensation reaction of fatty acid synthesis by the addition to an acyl acceptor of two carbons from malonyl-ACP. Catalyzes the first condensation reaction which initiates fatty acid synthesis and may therefore play a role in governing the total rate of fatty acid production. Possesses both acetoacetyl-ACP synthase and acetyl transacylase activities. Its substrate specificity determines the biosynthesis of branched-chain and/or straight-chain of fatty acids. The chain is Beta-ketoacyl-[acyl-carrier-protein] synthase III 4 from Streptomyces coelicolor (strain ATCC BAA-471 / A3(2) / M145).